We begin with the raw amino-acid sequence, 173 residues long: Cytochrome c-type biogenesis protein CcmE (173 aa).

At 1-8 (MNPRRKSR) the chain is on the cytoplasmic side. A helical; Signal-anchor for type II membrane protein transmembrane segment spans residues 9-29 (FKLVIFVVLGIAIASGLMLYA). Residues 30–173 (LRQNIDLFYT…RDRQEKEGAK (144 aa)) lie on the Periplasmic side of the membrane. Residues histidine 131 and tyrosine 135 each contribute to the heme site. The tract at residues 139 to 173 (ELGEKMQKVHKPMGIKAADLKGESERDRQEKEGAK) is disordered. Residues 156–173 (ADLKGESERDRQEKEGAK) show a composition bias toward basic and acidic residues.

The protein belongs to the CcmE/CycJ family.

It is found in the cell inner membrane. Heme chaperone required for the biogenesis of c-type cytochromes. Transiently binds heme delivered by CcmC and transfers the heme to apo-cytochromes in a process facilitated by CcmF and CcmH. The protein is Cytochrome c-type biogenesis protein CcmE of Haemophilus influenzae (strain 86-028NP).